Reading from the N-terminus, the 72-residue chain is DNA-directed RNA polymerase subunit omega (72 aa).

This sequence belongs to the RNA polymerase subunit omega family. In terms of assembly, the RNAP catalytic core consists of 2 alpha, 1 beta, 1 beta' and 1 omega subunit. When a sigma factor is associated with the core the holoenzyme is formed, which can initiate transcription.

It carries out the reaction RNA(n) + a ribonucleoside 5'-triphosphate = RNA(n+1) + diphosphate. Its function is as follows. Promotes RNA polymerase assembly. Latches the N- and C-terminal regions of the beta' subunit thereby facilitating its interaction with the beta and alpha subunits. The chain is DNA-directed RNA polymerase subunit omega from Lactobacillus johnsonii (strain CNCM I-12250 / La1 / NCC 533).